Reading from the N-terminus, the 461-residue chain is MANHKLWGGRFEASLEGWVEEFGASIGFDYRLAPYDLEGSLAHVKMLGQTGIIAPEEAAAIQAGLEKLLARYESGELEFDVRNEDIHMNMEALLTEKIGPVAGKLHTARSRNDQVATDMHLYLKDQLGQIADKLLNLRQVLLDLAEEHVETIMPGYTHLQHAQPISFAHHLLAYYQMFSRDSQRFAFNLEHTDLSPLGAAALAGTTFPIDRELTADLLGFKGIYHNSLDAVSDRDFILEFLSNSSILIMHLSRLCEELINWCSYEYGFVSLSDTFSTGSSIMPQKKNPDMAELIRGKSGRVYGHLFSLLTVMKSLPLAYNKDLQEDKEGMFDTVDTIQKSLDIMAGILSSMTVNKEKMLVSTQQDFSNATELADYLAKKGLPFREAHEIVGKLVLECSKAGYYLQDIPLSRYQEVSSLIEEDVYQALESQTAVQKRNSLGGTGFEQIRQELERAKKDLNNK.

Belongs to the lyase 1 family. Argininosuccinate lyase subfamily.

Its subcellular location is the cytoplasm. The catalysed reaction is 2-(N(omega)-L-arginino)succinate = fumarate + L-arginine. It functions in the pathway amino-acid biosynthesis; L-arginine biosynthesis; L-arginine from L-ornithine and carbamoyl phosphate: step 3/3. In Streptococcus gordonii (strain Challis / ATCC 35105 / BCRC 15272 / CH1 / DL1 / V288), this protein is Argininosuccinate lyase.